A 485-amino-acid chain; its full sequence is Protein nucleotidyltransferase YdiU (485 aa).

Gly90, Gly92, Arg93, Lys113, Asp125, Gly126, Arg176, and Arg183 together coordinate ATP. Residue Asp252 is the Proton acceptor of the active site. Mg(2+) contacts are provided by Asn253 and Asp262. Residue Asp262 participates in ATP binding.

The protein belongs to the SELO family. Requires Mg(2+) as cofactor. The cofactor is Mn(2+).

The enzyme catalyses L-seryl-[protein] + ATP = 3-O-(5'-adenylyl)-L-seryl-[protein] + diphosphate. The catalysed reaction is L-threonyl-[protein] + ATP = 3-O-(5'-adenylyl)-L-threonyl-[protein] + diphosphate. It carries out the reaction L-tyrosyl-[protein] + ATP = O-(5'-adenylyl)-L-tyrosyl-[protein] + diphosphate. It catalyses the reaction L-histidyl-[protein] + UTP = N(tele)-(5'-uridylyl)-L-histidyl-[protein] + diphosphate. The enzyme catalyses L-seryl-[protein] + UTP = O-(5'-uridylyl)-L-seryl-[protein] + diphosphate. The catalysed reaction is L-tyrosyl-[protein] + UTP = O-(5'-uridylyl)-L-tyrosyl-[protein] + diphosphate. Its function is as follows. Nucleotidyltransferase involved in the post-translational modification of proteins. It can catalyze the addition of adenosine monophosphate (AMP) or uridine monophosphate (UMP) to a protein, resulting in modifications known as AMPylation and UMPylation. This chain is Protein nucleotidyltransferase YdiU, found in Aliivibrio salmonicida (strain LFI1238) (Vibrio salmonicida (strain LFI1238)).